We begin with the raw amino-acid sequence, 587 residues long: Polyadenylate-binding protein-interacting protein 3 (587 aa).

One can recognise a Sm domain in the interval 51 to 132 (LLVYFTTCNI…LVQVIAKDLP (82 aa)). The tract at residues 422–503 (AKSENSSGWP…QSPQSPVFDG (82 aa)) is disordered. Residues 431-464 (PGSSISRNSENSAASSASNLPILSPSSSGSLSSE) are compositionally biased toward low complexity. Residues 467–475 (TLNPNAKEF) carry the PAM2-like 1; degenerate motif. The short motif at 476-486 (KLNPNAKSFKP) is the PAM2-like 2 element. Residues 486 to 498 (PSPSATRPQSPQS) show a composition bias toward polar residues.

The protein is Polyadenylate-binding protein-interacting protein 3 (CID3) of Arabidopsis thaliana (Mouse-ear cress).